Consider the following 406-residue polypeptide: Ubiquitin-like modifier-activating enzyme 5 (406 aa).

5 residues coordinate ATP: G82, D103, K126, N149, and N183. 2 residues coordinate Zn(2+): C225 and C228. Catalysis depends on C249, which acts as the Glycyl thioester intermediate. Residues C302 and C307 each contribute to the Zn(2+) site. The disordered stretch occupies residues 373–397 (EAPSKSTETTSEATTTTTGDETSLD). The span at 378-393 (STETTSEATTTTTGDE) shows a compositional bias: low complexity.

Belongs to the ubiquitin-activating E1 family. UBA5 subfamily.

Its function is as follows. E1-like enzyme which activates UFM1. This is Ubiquitin-like modifier-activating enzyme 5 from Drosophila willistoni (Fruit fly).